Consider the following 207-residue polypeptide: Large ribosomal subunit protein uL4 (207 aa).

Positions 49–78 (HAVKNRSAVSGGGRKPWRQKGTGRARQGSI) are disordered.

It belongs to the universal ribosomal protein uL4 family. As to quaternary structure, part of the 50S ribosomal subunit.

Functionally, one of the primary rRNA binding proteins, this protein initially binds near the 5'-end of the 23S rRNA. It is important during the early stages of 50S assembly. It makes multiple contacts with different domains of the 23S rRNA in the assembled 50S subunit and ribosome. Forms part of the polypeptide exit tunnel. This chain is Large ribosomal subunit protein uL4 (rplD), found in Streptococcus pyogenes serotype M1.